Here is a 579-residue protein sequence, read N- to C-terminus: Matrix metalloproteinase-C (579 aa).

The first 17 residues, 1–17 (MRLIYVIAILLVSTCQA), serve as a signal peptide directing secretion. Residues 18 to 129 (GFFSSLVSRF…SRCGVTDAPL (112 aa)) constitute a propeptide, activation peptide. Residues 32 to 51 (NSSPSSSSSSSSFSNSRKPS) form a disordered region. The segment covering 33 to 50 (SSPSSSSSSSSFSNSRKP) has biased composition (low complexity). Residues 120–127 (SRCGVTDA) carry the Cysteine switch motif. The Zn(2+) site is built by cysteine 122, histidine 200, aspartate 202, histidine 215, and histidine 225. Asparagine 231 carries an N-linked (GlcNAc...) asparagine glycan. Zn(2+) is bound at residue histidine 254. Residue glutamate 255 is part of the active site. Zn(2+)-binding residues include histidine 258 and histidine 264. Positions 307 to 394 (SGRSSSGSDF…SSSGSSGGGC (88 aa)) are disordered. The span at 315 to 324 (DFGGSSGGGS) shows a compositional bias: gly residues. Positions 325-341 (RTTARPTTTTRSWFGRF) are enriched in low complexity. Over residues 373 to 394 (WGSGSGSSGRGGSSSGSSGGGC) the composition is skewed to gly residues. 2 Hemopexin repeats span residues 395–437 (PSHI…FPSA) and 438–490 (PTPV…LGFS).

The protein belongs to the peptidase M10A family. Zn(2+) serves as cofactor.

It is found in the secreted. It localises to the extracellular space. Its subcellular location is the extracellular matrix. Inhibited by human TIMP1 and TIMP2 and the broad MMP inhibitors BB94 (Batimastat) and CT543. Functionally, metalloproteinase. The chain is Matrix metalloproteinase-C from Caenorhabditis elegans.